Here is a 363-residue protein sequence, read N- to C-terminus: Phosphoserine aminotransferase (363 aa).

Residue Arg-42 participates in L-glutamate binding. Pyridoxal 5'-phosphate is bound by residues 76–77 (GR), Trp-102, Thr-156, Asp-175, and Gln-198. An N6-(pyridoxal phosphate)lysine modification is found at Lys-199. Pyridoxal 5'-phosphate is bound at residue 240-241 (NT).

This sequence belongs to the class-V pyridoxal-phosphate-dependent aminotransferase family. SerC subfamily. As to quaternary structure, homodimer. Pyridoxal 5'-phosphate is required as a cofactor.

The protein resides in the cytoplasm. The catalysed reaction is O-phospho-L-serine + 2-oxoglutarate = 3-phosphooxypyruvate + L-glutamate. It carries out the reaction 4-(phosphooxy)-L-threonine + 2-oxoglutarate = (R)-3-hydroxy-2-oxo-4-phosphooxybutanoate + L-glutamate. It functions in the pathway amino-acid biosynthesis; L-serine biosynthesis; L-serine from 3-phospho-D-glycerate: step 2/3. The protein operates within cofactor biosynthesis; pyridoxine 5'-phosphate biosynthesis; pyridoxine 5'-phosphate from D-erythrose 4-phosphate: step 3/5. Catalyzes the reversible conversion of 3-phosphohydroxypyruvate to phosphoserine and of 3-hydroxy-2-oxo-4-phosphonooxybutanoate to phosphohydroxythreonine. This is Phosphoserine aminotransferase from Shewanella baltica (strain OS155 / ATCC BAA-1091).